A 155-amino-acid chain; its full sequence is 3-hydroxyacyl-[acyl-carrier-protein] dehydratase FabZ (155 aa).

His-59 is a catalytic residue.

It belongs to the thioester dehydratase family. FabZ subfamily.

The protein resides in the cytoplasm. It carries out the reaction a (3R)-hydroxyacyl-[ACP] = a (2E)-enoyl-[ACP] + H2O. Its function is as follows. Involved in unsaturated fatty acids biosynthesis. Catalyzes the dehydration of short chain beta-hydroxyacyl-ACPs and long chain saturated and unsaturated beta-hydroxyacyl-ACPs. This is 3-hydroxyacyl-[acyl-carrier-protein] dehydratase FabZ from Bartonella quintana (strain Toulouse) (Rochalimaea quintana).